Here is a 122-residue protein sequence, read N- to C-terminus: Large ribosomal subunit protein uL22 (122 aa).

Residues 102–122 are disordered; sequence VAEGKEMKSSKSHKKNQAEGK.

Belongs to the universal ribosomal protein uL22 family. In terms of assembly, part of the 50S ribosomal subunit.

This protein binds specifically to 23S rRNA; its binding is stimulated by other ribosomal proteins, e.g. L4, L17, and L20. It is important during the early stages of 50S assembly. It makes multiple contacts with different domains of the 23S rRNA in the assembled 50S subunit and ribosome. Functionally, the globular domain of the protein is located near the polypeptide exit tunnel on the outside of the subunit, while an extended beta-hairpin is found that lines the wall of the exit tunnel in the center of the 70S ribosome. This is Large ribosomal subunit protein uL22 from Helicobacter pylori (strain ATCC 700392 / 26695) (Campylobacter pylori).